We begin with the raw amino-acid sequence, 526 residues long: Bifunctional purine biosynthesis protein PurH (526 aa).

Positions 1 to 147 constitute an MGS-like domain; that stretch reads MTKIERALIS…KNWAHVAIVT (147 aa).

It belongs to the PurH family.

It catalyses the reaction (6R)-10-formyltetrahydrofolate + 5-amino-1-(5-phospho-beta-D-ribosyl)imidazole-4-carboxamide = 5-formamido-1-(5-phospho-D-ribosyl)imidazole-4-carboxamide + (6S)-5,6,7,8-tetrahydrofolate. It carries out the reaction IMP + H2O = 5-formamido-1-(5-phospho-D-ribosyl)imidazole-4-carboxamide. Its pathway is purine metabolism; IMP biosynthesis via de novo pathway; 5-formamido-1-(5-phospho-D-ribosyl)imidazole-4-carboxamide from 5-amino-1-(5-phospho-D-ribosyl)imidazole-4-carboxamide (10-formyl THF route): step 1/1. It participates in purine metabolism; IMP biosynthesis via de novo pathway; IMP from 5-formamido-1-(5-phospho-D-ribosyl)imidazole-4-carboxamide: step 1/1. The sequence is that of Bifunctional purine biosynthesis protein PurH from Laribacter hongkongensis (strain HLHK9).